The sequence spans 2386 residues: Protein kinase rad3 (2386 aa).

Residues 1386 to 1943 enclose the FAT domain; it reads TLGIVSLNCG…LWQLMATIKS (558 aa). A PI3K/PI4K catalytic domain is found at 2052–2370; that stretch reads FEDEVDIMNS…QIQELIKSAV (319 aa). Residues 2058 to 2064 form a G-loop region; it reads IMNSLQK. The tract at residues 2227-2235 is catalytic loop; the sequence is GLGDRHGEN. Positions 2247–2271 are activation loop; it reads HVDFNCLFDKGLTFEKPEKVPFRLT. Residues 2354–2386 form the FATC domain; it reads IPLSIEGQIQELIKSAVNPKNLVEMYIGWAAYF.

Belongs to the PI3/PI4-kinase family. ATM subfamily. As to quaternary structure, interacts with crb2 (via BRCT domain). Interacts with chk1.

Its subcellular location is the nucleus. The catalysed reaction is L-seryl-[protein] + ATP = O-phospho-L-seryl-[protein] + ADP + H(+). It catalyses the reaction L-threonyl-[protein] + ATP = O-phospho-L-threonyl-[protein] + ADP + H(+). Functionally, serine/threonine kinase which activates checkpoint signaling upon genotoxic stresses. Involved in G2 arrest following DNA damage where it phosphorylates chk1. Phosphorylation of 'Thr-73' and 'Ser-80' of checkpoint mediator crb2 promotes its interaction with chk1. It is also involved in the dependence of mitosis on the completion of DNA replication. This is Protein kinase rad3 (rad3) from Schizosaccharomyces pombe (strain 972 / ATCC 24843) (Fission yeast).